The following is a 173-amino-acid chain: Translation initiation factor IF-3 (173 aa).

The protein belongs to the IF-3 family. As to quaternary structure, monomer.

The protein resides in the cytoplasm. Its function is as follows. IF-3 binds to the 30S ribosomal subunit and shifts the equilibrium between 70S ribosomes and their 50S and 30S subunits in favor of the free subunits, thus enhancing the availability of 30S subunits on which protein synthesis initiation begins. The sequence is that of Translation initiation factor IF-3 from Aromatoleum aromaticum (strain DSM 19018 / LMG 30748 / EbN1) (Azoarcus sp. (strain EbN1)).